The primary structure comprises 301 residues: MEVTLKRSAALARQTTPLLRPLRPVATYPSNNNNNNNPTPQQRRPYSLFSSLTRPPPNYPGHVPLSFVEKTALAIGSGLISLKNPRRGDLIATFAETTSTPYFIYRLRDAMLSSPTGRRILRDRPRITSTSLNLPYLRSLPPNTVGHTYISWLDREGVSPDTRSPVRYIDDEECAYVMQRYRECHDFYHALTGLPVVREGEVALKAFEFANTLLPMTGLSVFSLVGMKKKERERFWGVYGPWAVRNGLRAKEVINVYWEEVLEKDVGELRKELGVEVPADLREMRRREREEKKRREAAARG.

A mitochondrion-targeting transit peptide spans 1-46 (MEVTLKRSAALARQTTPLLRPLRPVATYPSNNNNNNNPTPQQRRPY). The disordered stretch occupies residues 14-48 (QTTPLLRPLRPVATYPSNNNNNNNPTPQQRRPYSL). A compositionally biased stretch (polar residues) spans 38-48 (PTPQQRRPYSL). Zn(2+) contacts are provided by His185, Asp186, His189, and Glu201.

The protein belongs to the COQ4 family. In terms of assembly, component of a multi-subunit COQ enzyme complex, composed of at least COQ3, COQ4, COQ5, COQ6, COQ7 and COQ9. Requires Zn(2+) as cofactor.

The protein resides in the mitochondrion inner membrane. The catalysed reaction is a 4-hydroxy-3-methoxy-5-(all-trans-polyprenyl)benzoate + H(+) = a 2-methoxy-6-(all-trans-polyprenyl)phenol + CO2. The protein operates within cofactor biosynthesis; ubiquinone biosynthesis. In terms of biological role, lyase that catalyzes the C1-decarboxylation of 4-hydroxy-3-methoxy-5-(all-trans-polyprenyl)benzoic acid into 2-methoxy-6-(all-trans-polyprenyl)phenol during ubiquinone biosynthesis. The protein is Ubiquinone biosynthesis protein COQ4, mitochondrial of Podospora anserina (strain S / ATCC MYA-4624 / DSM 980 / FGSC 10383) (Pleurage anserina).